A 634-amino-acid chain; its full sequence is Sodium-dependent multivitamin transporter (634 aa).

12 helical membrane passes run F23–L43, M65–L85, F100–F120, I142–A162, L175–L195, L207–L227, F255–A275, A295–F315, L350–F370, F403–L423, L427–F447, and A455–V475. Residues N488 and N497 are each glycosylated (N-linked (GlcNAc...) asparagine). A helical transmembrane segment spans residues L526–L546.

It belongs to the sodium:solute symporter (SSF) (TC 2.A.21) family. Interacts with PDZD11. As to expression, expressed in the intestinal mucosa, liver and kidney (at protein level). Expressed in the colon.

It is found in the cell membrane. The protein resides in the apical cell membrane. The catalysed reaction is biotin(out) + 2 Na(+)(out) = biotin(in) + 2 Na(+)(in). The enzyme catalyses (R)-pantothenate(out) + 2 Na(+)(out) = (R)-pantothenate(in) + 2 Na(+)(in). It carries out the reaction (R)-lipoate(out) + 2 Na(+)(out) = (R)-lipoate(in) + 2 Na(+)(in). It catalyses the reaction iodide(out) + 2 Na(+)(out) = iodide(in) + 2 Na(+)(in). Functionally, sodium-dependent multivitamin transporter that mediates the electrogenic transport of pantothenate, biotin, lipoate and iodide. Functions as a Na(+)-coupled substrate symporter where the stoichiometry of Na(+):substrate is 2:1, creating an electrochemical Na(+) gradient used as driving force for substrate uptake. Required for biotin and pantothenate uptake in the intestine across the brush border membrane. Plays a role in the maintenance of intestinal mucosa integrity, by providing the gut mucosa with biotin. Contributes to the luminal uptake of biotin and pantothenate into the brain across the blood-brain barrier. The protein is Sodium-dependent multivitamin transporter of Mus musculus (Mouse).